The following is a 559-amino-acid chain: ATP synthase subunit beta-3, mitochondrial (559 aa).

Residues 1-28 (MASRRILSSLLRSSSSRSTSKSSLIGSR) show a composition bias toward low complexity. Positions 1–39 (MASRRILSSLLRSSSSRSTSKSSLIGSRNPRLLSPGPAH) are disordered. Residues 1–54 (MASRRILSSLLRSSSSRSTSKSSLIGSRNPRLLSPGPAHGAAPCGTLLGRVAEY) constitute a mitochondrion transit peptide. Ser62 bears the Phosphoserine mark. 234–241 (GGAGVGKT) contacts ATP.

It belongs to the ATPase alpha/beta chains family. In terms of assembly, F-type ATPases have 2 components, CF(1) - the catalytic core - and CF(0) - the membrane proton channel. CF(1) has five subunits: alpha(3), beta(3), gamma(1), delta(1), epsilon(1). CF(0) has three main subunits: a, b and c.

Its subcellular location is the mitochondrion. The protein resides in the mitochondrion inner membrane. The catalysed reaction is ATP + H2O + 4 H(+)(in) = ADP + phosphate + 5 H(+)(out). In terms of biological role, mitochondrial membrane ATP synthase (F(1)F(0) ATP synthase or Complex V) produces ATP from ADP in the presence of a proton gradient across the membrane which is generated by electron transport complexes of the respiratory chain. F-type ATPases consist of two structural domains, F(1) - containing the extramembraneous catalytic core, and F(0) - containing the membrane proton channel, linked together by a central stalk and a peripheral stalk. During catalysis, ATP synthesis in the catalytic domain of F(1) is coupled via a rotary mechanism of the central stalk subunits to proton translocation. Subunits alpha and beta form the catalytic core in F(1). Rotation of the central stalk against the surrounding alpha(3)beta(3) subunits leads to hydrolysis of ATP in three separate catalytic sites on the beta subunits. The sequence is that of ATP synthase subunit beta-3, mitochondrial from Arabidopsis thaliana (Mouse-ear cress).